Reading from the N-terminus, the 1212-residue chain is DNA-directed RNA polymerase subunit beta' (1212 aa).

Zn(2+) is bound by residues C60, C62, C75, and C78. D450, D452, and D454 together coordinate Mg(2+). Residues C819, C893, C900, and C903 each coordinate Zn(2+).

The protein belongs to the RNA polymerase beta' chain family. In terms of assembly, the RNAP catalytic core consists of 2 alpha, 1 beta, 1 beta' and 1 omega subunit. When a sigma factor is associated with the core the holoenzyme is formed, which can initiate transcription. Requires Mg(2+) as cofactor. The cofactor is Zn(2+).

It catalyses the reaction RNA(n) + a ribonucleoside 5'-triphosphate = RNA(n+1) + diphosphate. Its function is as follows. DNA-dependent RNA polymerase catalyzes the transcription of DNA into RNA using the four ribonucleoside triphosphates as substrates. This is DNA-directed RNA polymerase subunit beta' from Streptococcus thermophilus (strain ATCC BAA-491 / LMD-9).